Reading from the N-terminus, the 843-residue chain is Protein P (843 aa).

The terminal protein domain (TP) stretch occupies residues 1 to 177 (MPLSYQHFRK…FCGSPYSWEQ (177 aa)). Residues 178–346 (DLQHGRLVFQ…YCLCHIVNLI (169 aa)) are spacer. Disordered stretches follow at residues 220 to 258 (KSRL…VGVE) and 292 to 319 (SKGH…SQGS). Positions 308-319 (PPNSSRSQSQGS) are enriched in low complexity. Residues 347-690 (DDWGPCAEHG…YLNLYPVARQ (344 aa)) form a polymerase/reverse transcriptase domain (RT) region. A Reverse transcriptase domain is found at 357 to 600 (EHRIRTPRTP…YSLNFMGYVI (244 aa)). Positions 429, 551, and 552 each coordinate Mg(2+).

It belongs to the hepadnaviridae P protein family.

It carries out the reaction DNA(n) + a 2'-deoxyribonucleoside 5'-triphosphate = DNA(n+1) + diphosphate. It catalyses the reaction Endonucleolytic cleavage to 5'-phosphomonoester.. Activated by host HSP70 and HSP40 in vitro to be able to bind the epsilon loop of the pgRNA. Because deletion of the RNase H region renders the protein partly chaperone-independent, the chaperones may be needed indirectly to relieve occlusion of the RNA-binding site by this domain. Inhibited by several reverse-transcriptase inhibitors: Lamivudine, Adefovir and Entecavir. Functionally, multifunctional enzyme that converts the viral RNA genome into dsDNA in viral cytoplasmic capsids. This enzyme displays a DNA polymerase activity that can copy either DNA or RNA templates, and a ribonuclease H (RNase H) activity that cleaves the RNA strand of RNA-DNA heteroduplexes in a partially processive 3'- to 5'-endonucleasic mode. Neo-synthesized pregenomic RNA (pgRNA) are encapsidated together with the P protein, and reverse-transcribed inside the nucleocapsid. Initiation of reverse-transcription occurs first by binding the epsilon loop on the pgRNA genome, and is initiated by protein priming, thereby the 5'-end of (-)DNA is covalently linked to P protein. Partial (+)DNA is synthesized from the (-)DNA template and generates the relaxed circular DNA (RC-DNA) genome. After budding and infection, the RC-DNA migrates in the nucleus, and is converted into a plasmid-like covalently closed circular DNA (cccDNA). The activity of P protein does not seem to be necessary for cccDNA generation, and is presumably released from (+)DNA by host nuclear DNA repair machinery. This is Protein P from Hepatitis B virus genotype B1 (isolate Japan/Yamagata-2/1998) (HBV-B).